Here is a 506-residue protein sequence, read N- to C-terminus: Nucleoside import ATP-binding protein NupA (506 aa).

ABC transporter domains lie at 7–242 (IQMI…VGRS) and 259–503 (LEIK…VGGN). 39–46 (GENGAGKS) provides a ligand contact to ATP.

Belongs to the ABC transporter superfamily. The complex is composed of two ATP-binding proteins (NupA), two transmembrane proteins (NupB and NupC) and a solute-binding protein (BmpA).

It is found in the cell membrane. Its function is as follows. Part of an ABC transporter complex involved in the uptake of all common nucleosides. Responsible for energy coupling to the transport system. The polypeptide is Nucleoside import ATP-binding protein NupA (Lactococcus lactis subsp. cremoris (strain MG1363)).